The following is a 186-amino-acid chain: UPF0301 protein Nmul_A2478 (186 aa).

Belongs to the UPF0301 (AlgH) family.

The sequence is that of UPF0301 protein Nmul_A2478 from Nitrosospira multiformis (strain ATCC 25196 / NCIMB 11849 / C 71).